Consider the following 178-residue polypeptide: RNA-binding protein (178 aa).

The tract at residues 108 to 178 (SGFQKPKIGS…KGKGRRGGKR (71 aa)) is disordered. The segment covering 168–178 (SKGKGRRGGKR) has biased composition (basic residues).

Belongs to the phytoreovirus RNA-binding protein family.

It is found in the host cytoplasm. Its function is as follows. Constituent of viral factories. Binds to ssRNA and dsRNA. This chain is RNA-binding protein, found in Wound tumor virus (strain NJ) (WTV).